The chain runs to 339 residues: Glycerol-3-phosphate dehydrogenase [NAD(P)+] (339 aa).

The NADPH site is built by Ser-14, Tyr-15, His-35, and Lys-109. Sn-glycerol 3-phosphate-binding residues include Lys-109, Gly-138, and Thr-140. Ala-142 provides a ligand contact to NADPH. Positions 194, 247, 257, 258, and 259 each coordinate sn-glycerol 3-phosphate. The Proton acceptor role is filled by Lys-194. Residue Arg-258 participates in NADPH binding. NADPH-binding residues include Val-282 and Glu-284.

The protein belongs to the NAD-dependent glycerol-3-phosphate dehydrogenase family.

The protein localises to the cytoplasm. It carries out the reaction sn-glycerol 3-phosphate + NAD(+) = dihydroxyacetone phosphate + NADH + H(+). It catalyses the reaction sn-glycerol 3-phosphate + NADP(+) = dihydroxyacetone phosphate + NADPH + H(+). It functions in the pathway membrane lipid metabolism; glycerophospholipid metabolism. Catalyzes the reduction of the glycolytic intermediate dihydroxyacetone phosphate (DHAP) to sn-glycerol 3-phosphate (G3P), the key precursor for phospholipid synthesis. This chain is Glycerol-3-phosphate dehydrogenase [NAD(P)+], found in Shewanella pealeana (strain ATCC 700345 / ANG-SQ1).